Reading from the N-terminus, the 486-residue chain is Cardiolipin synthase A (486 aa).

Transmembrane regions (helical) follow at residues T3–V23 and M38–F58. 2 PLD phosphodiesterase domains span residues M219–R246 and E399–S426. Catalysis depends on residues H224, K226, D231, H404, K406, and D411.

Belongs to the phospholipase D family. Cardiolipin synthase subfamily. ClsA sub-subfamily.

The protein resides in the cell inner membrane. The catalysed reaction is 2 a 1,2-diacyl-sn-glycero-3-phospho-(1'-sn-glycerol) = a cardiolipin + glycerol. Functionally, catalyzes the reversible phosphatidyl group transfer from one phosphatidylglycerol molecule to another to form cardiolipin (CL) (diphosphatidylglycerol) and glycerol. The protein is Cardiolipin synthase A of Yersinia pseudotuberculosis serotype O:1b (strain IP 31758).